The chain runs to 936 residues: VPS35 endosomal protein-sorting factor-like (936 aa).

Disordered stretches follow at residues 43-69 (SKTK…VDPL) and 87-113 (DPAA…VGPD). Residues 51–69 (KGSTSSTSSSSSSSVVDPL) show a composition bias toward low complexity. The residue at position 265 (Ser-265) is a Phosphoserine. Residues 672-692 (AFVRACVAYCFITIPSLVGIF) traverse the membrane as a helical segment.

The protein belongs to the VPS35L family. In terms of assembly, component of the heterotrimeric retriever complex formed by VPS26C, VPS29 and VPS35L. Interacts with VPS29. Interacts with COMMD1, CCDC93 and CCDC22; associates with the CCC (COMMD/CCDC22/CCDC93) complex which contains at least COMMD1 (and possibly other COMM domain-containing proteins), CCDC22 and CCDC93. Interacts with WASHC1, WASHC2A and WASHC2C. Interacts with SNX17 and SNX31.

The protein localises to the membrane. Its subcellular location is the endosome. Functionally, acts as a component of the retriever complex. The retriever complex is a heterotrimeric complex related to retromer cargo-selective complex (CSC) and essential for retromer-independent retrieval and recycling of numerous cargos such as integrin alpha-5/beta-1 (ITGA5:ITGB1). The recruitment of the retriever complex to the endosomal membrane involves CCC and WASH complexes. In the endosomes, drives the retrieval and recycling of NxxY-motif-containing cargo proteins by coupling to SNX17, a cargo essential for the homeostatic maintenance of numerous cell surface proteins associated with processes that include cell migration, cell adhesion, nutrient supply and cell signaling. Involved in copper-dependent ATP7A trafficking between the trans-Golgi network and vesicles in the cell periphery; the function is proposed to depend on its association with the CCC complex and cooperation with the WASH complex on early endosomes. Seems not to be required for CCC complex stability. The polypeptide is VPS35 endosomal protein-sorting factor-like (Rattus norvegicus (Rat)).